Here is a 123-residue protein sequence, read N- to C-terminus: Large ribosomal subunit protein uL14 (123 aa).

It belongs to the universal ribosomal protein uL14 family. Part of the 50S ribosomal subunit. Forms a cluster with proteins L3 and L19. In the 70S ribosome, L14 and L19 interact and together make contacts with the 16S rRNA in bridges B5 and B8.

Functionally, binds to 23S rRNA. Forms part of two intersubunit bridges in the 70S ribosome. The sequence is that of Large ribosomal subunit protein uL14 from Photobacterium profundum (strain SS9).